The sequence spans 450 residues: UDP-N-acetylmuramoylalanine--D-glutamate ligase (450 aa).

Glycine 118–threonine 124 contacts ATP.

The protein belongs to the MurCDEF family.

The protein localises to the cytoplasm. It carries out the reaction UDP-N-acetyl-alpha-D-muramoyl-L-alanine + D-glutamate + ATP = UDP-N-acetyl-alpha-D-muramoyl-L-alanyl-D-glutamate + ADP + phosphate + H(+). It functions in the pathway cell wall biogenesis; peptidoglycan biosynthesis. Functionally, cell wall formation. Catalyzes the addition of glutamate to the nucleotide precursor UDP-N-acetylmuramoyl-L-alanine (UMA). This is UDP-N-acetylmuramoylalanine--D-glutamate ligase from Halalkalibacterium halodurans (strain ATCC BAA-125 / DSM 18197 / FERM 7344 / JCM 9153 / C-125) (Bacillus halodurans).